A 259-amino-acid polypeptide reads, in one-letter code: O-antigen export system permease protein RfbA (259 aa).

The next 6 helical transmembrane spans lie at 33-53 (FGYLWSIANPLLFAMIYYFIF), 73-95 (FPWQWFASSATNSLFSFIANAQI), 111-131 (VMMEGLHFLCTIPVIIAFLFV), 142-162 (WGIPIIAIGQVIFTFGISIIF), 176-196 (VSLGIMLMFYCTPILYASDMI), and 228-248 (EYISILYITGFILTIVGLAIF). In terms of domain architecture, ABC transmembrane type-2 spans 33-251 (FGYLWSIANP…IVGLAIFNKL (219 aa)).

The protein belongs to the ABC-2 integral membrane protein family.

The protein localises to the cell inner membrane. Its function is as follows. May form an ATP-driven O-antigen export apparatus, in association with RfbB. In Klebsiella pneumoniae, this protein is O-antigen export system permease protein RfbA (rfbA).